A 100-amino-acid chain; its full sequence is Pregnancy-associated protein bPAP (100 aa).

The disordered stretch occupies residues 1–40; it reads DSELAGPRGARGPHGLSGPHGLSGLXGPXGYTGPIGMXGL. A compositionally biased stretch (low complexity) spans 13-29; the sequence is PHGLSGPHGLSGLXGPX.

As to expression, detected at high levels in the urine of pregnant females (at protein level) and at far lower levels in the urine of nonpregnant females.

The protein is Pregnancy-associated protein bPAP of Bos taurus (Bovine).